The following is a 394-amino-acid chain: Elongation factor Tu (394 aa).

One can recognise a tr-type G domain in the interval 10-204 (KPHVNIGTIG…AVDSYIPQPV (195 aa)). The interval 19–26 (GHVDHGKT) is G1. 19-26 (GHVDHGKT) is a binding site for GTP. Threonine 26 lines the Mg(2+) pocket. Residues 60–64 (GITIS) are G2. Residues 81–84 (DCPG) form a G3 region. GTP-binding positions include 81–85 (DCPGH) and 136–139 (NKVD). Residues 136 to 139 (NKVD) are G4. A G5 region spans residues 174–176 (SAL).

It belongs to the TRAFAC class translation factor GTPase superfamily. Classic translation factor GTPase family. EF-Tu/EF-1A subfamily. Monomer.

Its subcellular location is the cytoplasm. It catalyses the reaction GTP + H2O = GDP + phosphate + H(+). Its function is as follows. GTP hydrolase that promotes the GTP-dependent binding of aminoacyl-tRNA to the A-site of ribosomes during protein biosynthesis. The sequence is that of Elongation factor Tu from Rickettsia montanensis.